Here is a 237-residue protein sequence, read N- to C-terminus: RNA chaperone ProQ (237 aa).

The segment at 106–188 is disordered; sequence AKARVQAQRA…QPRPVPVTDI (83 aa). The segment covering 146 to 158 has biased composition (basic and acidic residues); the sequence is PRREAGAAPENRK.

It belongs to the ProQ family.

The protein localises to the cytoplasm. RNA chaperone with significant RNA binding, RNA strand exchange and RNA duplexing activities. May regulate ProP activity through an RNA-based, post-transcriptional mechanism. This Yersinia pseudotuberculosis serotype O:1b (strain IP 31758) protein is RNA chaperone ProQ.